The primary structure comprises 506 residues: MDTILRLSHITKSFPGVKALSDIHLEIVRGEIHALLGENGAGKSTLMKILCGIHQPDAGTIEIDGTARHFTSYHDAVAAGVGIVFQEFSLIPHLDAVDNLFLGRELRTRWGVRDRARMRRAAAGIFARLGVSIDLDAPLRTLSVAQQQFVEIGKALSLDARILILDEPTATLTPAEAEHLFAIMRELKRQGVAMIFISHHLDEIFAVCDRITVLRDGQYVATTDVSSTDVEQLVRMMVGRRLESSFPPKPVRAADAPAVLEVDALQIERDGPVNRFALHAGEILGFAGLVGSGRTETALAVIGATRAHRKTVRVRGTPAKLADPADALRAGIGLLPESRKTEGLVTSFSIRDNISLNNLGKYRSMRWLIDRRGEARTTHDVMRRVGVKAPSIHTEVATLSGGNQQKVVIARWLNHHASVLIFDEPTRGIDVGAKAEIYGLMRELTARGYAIIMISSELPEIVGMCDRVAVFRQGRIEATLEGDEIDPDTVMTHATAGTRGATHEPA.

ABC transporter domains follow at residues 5–241 and 251–498; these read LRLS…VGRR and VRAA…TAGT. 37 to 44 provides a ligand contact to ATP; the sequence is GENGAGKS.

The protein belongs to the ABC transporter superfamily. Ribose importer (TC 3.A.1.2.1) family. The complex is composed of an ATP-binding protein (RbsA), two transmembrane proteins (RbsC) and a solute-binding protein (RbsB).

The protein localises to the cell inner membrane. The enzyme catalyses D-ribose(out) + ATP + H2O = D-ribose(in) + ADP + phosphate + H(+). Part of the ABC transporter complex RbsABC involved in ribose import. Responsible for energy coupling to the transport system. The sequence is that of Ribose import ATP-binding protein RbsA 2 from Burkholderia ambifaria (strain ATCC BAA-244 / DSM 16087 / CCUG 44356 / LMG 19182 / AMMD) (Burkholderia cepacia (strain AMMD)).